Here is a 229-residue protein sequence, read N- to C-terminus: tRNA pseudouridine synthase B (229 aa).

The active-site Nucleophile is D42.

Belongs to the pseudouridine synthase TruB family. Type 1 subfamily.

It catalyses the reaction uridine(55) in tRNA = pseudouridine(55) in tRNA. Functionally, responsible for synthesis of pseudouridine from uracil-55 in the psi GC loop of transfer RNAs. The chain is tRNA pseudouridine synthase B from Ureaplasma urealyticum serovar 10 (strain ATCC 33699 / Western).